Consider the following 408-residue polypeptide: Multifunctional CCA protein (408 aa).

Gly-8 and Arg-11 together coordinate ATP. CTP is bound by residues Gly-8 and Arg-11. Mg(2+) contacts are provided by Asp-21 and Asp-23. ATP contacts are provided by Arg-91, Arg-137, and Arg-140. Residues Arg-91, Arg-137, and Arg-140 each contribute to the CTP site. The 102-residue stretch at 228–329 (SGVHTLMVLE…VKLFDKADFW (102 aa)) folds into the HD domain.

This sequence belongs to the tRNA nucleotidyltransferase/poly(A) polymerase family. Bacterial CCA-adding enzyme type 1 subfamily. In terms of assembly, monomer. Can also form homodimers and oligomers. Mg(2+) serves as cofactor. Requires Ni(2+) as cofactor.

The catalysed reaction is a tRNA precursor + 2 CTP + ATP = a tRNA with a 3' CCA end + 3 diphosphate. The enzyme catalyses a tRNA with a 3' CCA end + 2 CTP + ATP = a tRNA with a 3' CCACCA end + 3 diphosphate. Catalyzes the addition and repair of the essential 3'-terminal CCA sequence in tRNAs without using a nucleic acid template. Adds these three nucleotides in the order of C, C, and A to the tRNA nucleotide-73, using CTP and ATP as substrates and producing inorganic pyrophosphate. tRNA 3'-terminal CCA addition is required both for tRNA processing and repair. Also involved in tRNA surveillance by mediating tandem CCA addition to generate a CCACCA at the 3' terminus of unstable tRNAs. While stable tRNAs receive only 3'-terminal CCA, unstable tRNAs are marked with CCACCA and rapidly degraded. The protein is Multifunctional CCA protein of Shewanella piezotolerans (strain WP3 / JCM 13877).